Reading from the N-terminus, the 131-residue chain is ATP synthase epsilon chain (131 aa).

It belongs to the ATPase epsilon chain family. As to quaternary structure, F-type ATPases have 2 components, CF(1) - the catalytic core - and CF(0) - the membrane proton channel. CF(1) has five subunits: alpha(3), beta(3), gamma(1), delta(1), epsilon(1). CF(0) has three main subunits: a, b and c.

It localises to the cell inner membrane. Functionally, produces ATP from ADP in the presence of a proton gradient across the membrane. The polypeptide is ATP synthase epsilon chain (Wolinella succinogenes (strain ATCC 29543 / DSM 1740 / CCUG 13145 / JCM 31913 / LMG 7466 / NCTC 11488 / FDC 602W) (Vibrio succinogenes)).